The primary structure comprises 174 residues: Ribosome rescue factor SmrB (174 aa).

The region spanning 96-171 (LDLHGMNQQQ…GDSAILVLLD (76 aa)) is the Smr domain.

The protein belongs to the SmrB family. Associates with collided ribosomes, but not with correctly translating polysomes.

Functionally, acts as a ribosome collision sensor. Detects stalled/collided disomes (pairs of ribosomes where the leading ribosome is stalled and a second ribosome has collided with it) and endonucleolytically cleaves mRNA at the 5' boundary of the stalled ribosome. Stalled/collided disomes form a new interface (primarily via the 30S subunits) that binds SmrB. Cleaved mRNA becomes available for tmRNA ligation, leading to ribosomal subunit dissociation and rescue of stalled ribosomes. The chain is Ribosome rescue factor SmrB from Aeromonas hydrophila subsp. hydrophila (strain ATCC 7966 / DSM 30187 / BCRC 13018 / CCUG 14551 / JCM 1027 / KCTC 2358 / NCIMB 9240 / NCTC 8049).